The primary structure comprises 115 residues: Aspartate 1-decarboxylase (115 aa).

The active-site Schiff-base intermediate with substrate; via pyruvic acid is the Ser-25. A Pyruvic acid (Ser) modification is found at Ser-25. Thr-57 lines the substrate pocket. Residue Tyr-58 is the Proton donor of the active site. Position 71-73 (71-73 (GAA)) interacts with substrate.

Belongs to the PanD family. Heterooctamer of four alpha and four beta subunits. It depends on pyruvate as a cofactor. In terms of processing, is synthesized initially as an inactive proenzyme, which is activated by self-cleavage at a specific serine bond to produce a beta-subunit with a hydroxyl group at its C-terminus and an alpha-subunit with a pyruvoyl group at its N-terminus.

It is found in the cytoplasm. The enzyme catalyses L-aspartate + H(+) = beta-alanine + CO2. It functions in the pathway cofactor biosynthesis; (R)-pantothenate biosynthesis; beta-alanine from L-aspartate: step 1/1. Its function is as follows. Catalyzes the pyruvoyl-dependent decarboxylation of aspartate to produce beta-alanine. The chain is Aspartate 1-decarboxylase from Campylobacter concisus (strain 13826).